Reading from the N-terminus, the 267-residue chain is MKKNIDSNIKTIVSALKTLREQKPLVVNISNYVAMNNTANALLALGASPIMAHSRDEMAEMLSFSGALVVNIGTLDSLWIPRMLFAVEQANIHKKTVVLDPVGCGASSLRTATSWQIAEAANKLIIRGNASEIIALAGEKGQSKGVDSLDSSEAALGAARYLRDTYQCAVVISGATDFIVTAGGQIQLNNGHAMMPYVTAMGCTLSALTGAFAAVGEETGLAAAAVLGVAGEIAAEQSKGPGSLQLNLLDALYQLDEATLIQRLKLS.

Residue methionine 51 coordinates substrate. The ATP site is built by arginine 127 and serine 173. Alanine 200 lines the substrate pocket.

The protein belongs to the Thz kinase family. Mg(2+) serves as cofactor.

The enzyme catalyses 5-(2-hydroxyethyl)-4-methylthiazole + ATP = 4-methyl-5-(2-phosphooxyethyl)-thiazole + ADP + H(+). It participates in cofactor biosynthesis; thiamine diphosphate biosynthesis; 4-methyl-5-(2-phosphoethyl)-thiazole from 5-(2-hydroxyethyl)-4-methylthiazole: step 1/1. Functionally, catalyzes the phosphorylation of the hydroxyl group of 4-methyl-5-beta-hydroxyethylthiazole (THZ). This is Hydroxyethylthiazole kinase from Psychromonas ingrahamii (strain DSM 17664 / CCUG 51855 / 37).